The following is a 38-amino-acid chain: Large ribosomal subunit protein bL36 (38 aa).

This sequence belongs to the bacterial ribosomal protein bL36 family.

The sequence is that of Large ribosomal subunit protein bL36 from Thermotoga maritima (strain ATCC 43589 / DSM 3109 / JCM 10099 / NBRC 100826 / MSB8).